Reading from the N-terminus, the 303-residue chain is Quinolinate synthase (303 aa).

His23 and Ser40 together coordinate iminosuccinate. Cys85 is a [4Fe-4S] cluster binding site. Residues 111 to 113 (YVN) and Ser128 contribute to the iminosuccinate site. Position 171 (Cys171) interacts with [4Fe-4S] cluster. Residues 197-199 (HPE) and Thr214 contribute to the iminosuccinate site. Cys259 is a binding site for [4Fe-4S] cluster.

This sequence belongs to the quinolinate synthase family. Type 2 subfamily. [4Fe-4S] cluster is required as a cofactor.

Its subcellular location is the cytoplasm. It catalyses the reaction iminosuccinate + dihydroxyacetone phosphate = quinolinate + phosphate + 2 H2O + H(+). The protein operates within cofactor biosynthesis; NAD(+) biosynthesis; quinolinate from iminoaspartate: step 1/1. Its function is as follows. Catalyzes the condensation of iminoaspartate with dihydroxyacetone phosphate to form quinolinate. The chain is Quinolinate synthase from Thermodesulfovibrio yellowstonii (strain ATCC 51303 / DSM 11347 / YP87).